The following is a 119-amino-acid chain: Small ribosomal subunit protein uS13 (119 aa).

The interval Pro96–Arg119 is disordered.

This sequence belongs to the universal ribosomal protein uS13 family. As to quaternary structure, part of the 30S ribosomal subunit. Forms a loose heterodimer with protein S19. Forms two bridges to the 50S subunit in the 70S ribosome.

In terms of biological role, located at the top of the head of the 30S subunit, it contacts several helices of the 16S rRNA. In the 70S ribosome it contacts the 23S rRNA (bridge B1a) and protein L5 of the 50S subunit (bridge B1b), connecting the 2 subunits; these bridges are implicated in subunit movement. Contacts the tRNAs in the A and P-sites. The protein is Small ribosomal subunit protein uS13 of Buchnera aphidicola subsp. Cinara cedri (strain Cc).